A 261-amino-acid polypeptide reads, in one-letter code: Carbonic anhydrase 1 (261 aa).

Alanine 2 carries the N-acetylalanine modification. Residues 4–261 (SDWGYDSPNG…LKGRTVRAFF (258 aa)) enclose the Alpha-carbonic anhydrase domain. The active-site Proton donor/acceptor is the histidine 65. Positions 95, 97, and 120 each coordinate Zn(2+). Residues threonine 200 and 200-201 (TH) each bind substrate.

Belongs to the alpha-carbonic anhydrase family. Zn(2+) serves as cofactor.

It localises to the cytoplasm. The catalysed reaction is hydrogencarbonate + H(+) = CO2 + H2O. It catalyses the reaction urea = cyanamide + H2O. Inhibited by acetazolamide. Functionally, catalyzes the reversible hydration of carbon dioxide. Can hydrate cyanamide to urea. The polypeptide is Carbonic anhydrase 1 (CA1) (Equus caballus (Horse)).